The primary structure comprises 258 residues: tRNA pseudouridine synthase A (258 aa).

Aspartate 61 acts as the Nucleophile in catalysis. Substrate is bound at residue tyrosine 119.

This sequence belongs to the tRNA pseudouridine synthase TruA family. Homodimer.

It carries out the reaction uridine(38/39/40) in tRNA = pseudouridine(38/39/40) in tRNA. Formation of pseudouridine at positions 38, 39 and 40 in the anticodon stem and loop of transfer RNAs. This chain is tRNA pseudouridine synthase A, found in Chlorobium phaeobacteroides (strain DSM 266 / SMG 266 / 2430).